Here is a 181-residue protein sequence, read N- to C-terminus: ADP-ribosylation factor 1-like 2 (181 aa).

A lipid anchor (N-myristoyl glycine) is attached at G2. Residues 3–16 (NVFGSLFKGLFGKK) form an important for the stable binding to the membranes region. GTP contacts are provided by residues 24–32 (GLDAAGKTT), 126–129 (NKQD), and A160.

Belongs to the small GTPase superfamily. Arf family.

It localises to the golgi apparatus membrane. The catalysed reaction is GTP + H2O = GDP + phosphate + H(+). With respect to regulation, alternates between an inactive GDP-bound form and an active GTP-bound form. Activated by a guanine nucleotide-exchange factor (GEF) and inactivated by GTPase-activating protein (GAP). In terms of biological role, small GTPase involved in protein trafficking between different compartments. Modulates vesicle budding and uncoating within the Golgi complex. In its GTP-bound form, triggers the recruitment of coatomer proteins to the Golgi membrane. The hydrolysis of ARF1-bound GTP, which is mediated by ARFGAPs proteins, is required for dissociation of coat proteins from Golgi membranes and vesicles. Involved in endoplasmic reticulum dynamics during embryogenesis. Also required for adult germline function. Plays a role in cell shedding during embryogenesis probably by promoting the endocytosis of cell adhesion molecules. During neurogenesis, involved in cell autonomous Q.p neuroblast asymmetric divisions that generate one precursor cell and one apoptotic cell, probably by controlling endocytosis. Plays a role in maintaining mitochondrial morphology. In Caenorhabditis briggsae, this protein is ADP-ribosylation factor 1-like 2 (arf-1.2).